A 514-amino-acid chain; its full sequence is 2,3-bisphosphoglycerate-independent phosphoglycerate mutase (514 aa).

Mn(2+) is bound by residues D14 and S64. S64 serves as the catalytic Phosphoserine intermediate. Residues H125, 155–156, R187, R193, 263–266, and K336 each bind substrate; these read RD and RADR. D403, H407, D444, H445, and H463 together coordinate Mn(2+).

The protein belongs to the BPG-independent phosphoglycerate mutase family. In terms of assembly, monomer. The cofactor is Mn(2+).

It carries out the reaction (2R)-2-phosphoglycerate = (2R)-3-phosphoglycerate. The protein operates within carbohydrate degradation; glycolysis; pyruvate from D-glyceraldehyde 3-phosphate: step 3/5. In terms of biological role, catalyzes the interconversion of 2-phosphoglycerate and 3-phosphoglycerate. The protein is 2,3-bisphosphoglycerate-independent phosphoglycerate mutase of Salmonella paratyphi A (strain ATCC 9150 / SARB42).